A 351-amino-acid chain; its full sequence is Ribonucleoside-diphosphate reductase subunit beta (351 aa).

Asp-94, Glu-124, and His-127 together coordinate Fe cation. Tyr-131 is an active-site residue. Residues Glu-191, Glu-225, and His-228 each contribute to the Fe cation site.

Belongs to the ribonucleoside diphosphate reductase small chain family. Tetramer of two alpha and two beta subunits. Fe cation serves as cofactor.

The catalysed reaction is a 2'-deoxyribonucleoside 5'-diphosphate + [thioredoxin]-disulfide + H2O = a ribonucleoside 5'-diphosphate + [thioredoxin]-dithiol. Its function is as follows. Provides the precursors necessary for DNA synthesis. Catalyzes the biosynthesis of deoxyribonucleotides from the corresponding ribonucleotides. The polypeptide is Ribonucleoside-diphosphate reductase subunit beta (nrdB) (Treponema pallidum (strain Nichols)).